A 1639-amino-acid chain; its full sequence is Protein GFS12 (1639 aa).

In terms of domain architecture, Protein kinase 1 spans 206 to 294; that stretch reads LEEKSKLRCL…IRPSNILLSD (89 aa). The region spanning 336–608 is the BEACH domain; the sequence is LKISSHLDWQ…FHGFGVDNKR (273 aa). A Protein kinase 2 domain is found at 715 to 788; that stretch reads IAGDIFSIGC…AKSLLDSPYF (74 aa). WD repeat units follow at residues 1290-1333 and 1336-1373; these read AHHG…CVSS and AHEE…LISL. Over residues 1377 to 1398 the composition is skewed to low complexity; it reads SPSDQDQASSDPSSKNNSNPCN. The segment at 1377–1399 is disordered; the sequence is SPSDQDQASSDPSSKNNSNPCNR. WD repeat units lie at residues 1465–1499, 1511–1549, and 1609–1639; these read ALCS…RLFD, AHDG…TPQP, and RVKS…RICC.

Belongs to the protein kinase superfamily. Tyr protein kinase family. In terms of assembly, interacts (via protein kinase 2 domain) with BCHC1 (via PH-BEACH domain). Weakly expressed in the cotyledons of germinating seedlings. Restricted to the vascular tissues of cotyledons. Detected in root tips, apical meristem, young flower buds and receptacles.

In terms of biological role, may act predominantly to suppress BCHC1, which itself is a negative factor in protein storage vacuole (PSV) trafficking regulation and plant effector triggered immunity (ETI). Required for ETI, but not for cell death. This chain is Protein GFS12, found in Arabidopsis thaliana (Mouse-ear cress).